We begin with the raw amino-acid sequence, 345 residues long: S-adenosylmethionine:tRNA ribosyltransferase-isomerase (345 aa).

This sequence belongs to the QueA family. Monomer.

It localises to the cytoplasm. It catalyses the reaction 7-aminomethyl-7-carbaguanosine(34) in tRNA + S-adenosyl-L-methionine = epoxyqueuosine(34) in tRNA + adenine + L-methionine + 2 H(+). Its pathway is tRNA modification; tRNA-queuosine biosynthesis. Its function is as follows. Transfers and isomerizes the ribose moiety from AdoMet to the 7-aminomethyl group of 7-deazaguanine (preQ1-tRNA) to give epoxyqueuosine (oQ-tRNA). The chain is S-adenosylmethionine:tRNA ribosyltransferase-isomerase from Shewanella sp. (strain MR-7).